Here is a 294-residue protein sequence, read N- to C-terminus: MNFQDLMFSLLNYWKDQECLVWQPYDIEKGAGTMNPATFLRALGPEPWNVAYLEPSRRPTDGRYGENPNRLYQHHQIQVIMKPTPDDIQERYLESLQALGINPLEHDIRFVEDNWESPTLGAWGLGWEVWLDGMEITQFTYFQQVGGIDVDKVSCEITYGLERIAMYLQGVENVFDIKWNDQVTYGELFKHAEYEHSKFSFEDSDTEVLFKEFELYEKEAKRLLNQGLVLPGYDYVLKCSHTFNLLDARGAISVTERTGYIGRVRDLARICAKAFLSQREELNYPLLKEGISYA.

It belongs to the class-II aminoacyl-tRNA synthetase family. As to quaternary structure, tetramer of two alpha and two beta subunits.

Its subcellular location is the cytoplasm. It carries out the reaction tRNA(Gly) + glycine + ATP = glycyl-tRNA(Gly) + AMP + diphosphate. The chain is Glycine--tRNA ligase alpha subunit from Natranaerobius thermophilus (strain ATCC BAA-1301 / DSM 18059 / JW/NM-WN-LF).